We begin with the raw amino-acid sequence, 271 residues long: Bis(5'-nucleosyl)-tetraphosphatase, symmetrical (271 aa).

The protein belongs to the Ap4A hydrolase family.

The catalysed reaction is P(1),P(4)-bis(5'-adenosyl) tetraphosphate + H2O = 2 ADP + 2 H(+). In terms of biological role, hydrolyzes diadenosine 5',5'''-P1,P4-tetraphosphate to yield ADP. The polypeptide is Bis(5'-nucleosyl)-tetraphosphatase, symmetrical (Aliivibrio fischeri (strain ATCC 700601 / ES114) (Vibrio fischeri)).